An 807-amino-acid chain; its full sequence is Dual specificity protein kinase YAK1 (807 aa).

Positions 1 to 19 (MNSSNNNDSSSSNSNMNNS) are enriched in low complexity. Residues 1–84 (MNSSNNNDSS…QQQQQQQQNS (84 aa)) form a disordered region. The segment covering 20-31 (LSPTLVTHSDAS) has biased composition (polar residues). Ser38 bears the Phosphoserine mark. Low complexity predominate over residues 55 to 84 (NQGSQRSPQQQHQNHHQQQQQQQQQQQQNS). Phosphoserine occurs at positions 115, 118, and 127. The disordered stretch occupies residues 124 to 180 (RRKSSLVVPPARAPAPNPFQYDSYPAYTSSNTSLAGNSSGQYPSGYQQQQQQVYQQG). The segment covering 149–160 (AYTSSNTSLAGN) has biased composition (polar residues). Residues 161–180 (SSGQYPSGYQQQQQQVYQQG) show a composition bias toward low complexity. At Ser206 the chain carries Phosphoserine. The segment covering 214–224 (SNFSSLNSNTN) has biased composition (low complexity). The segment at 214–254 (SNFSSLNSNTNQGTNSIPVMSPYRRLSAYPPSTSPPLQPPF) is disordered. Ser240, Ser245, and Ser247 each carry phosphoserine. Thr288 is subject to Phosphothreonine. Ser295 is modified (phosphoserine). Residues 369–704 (YLVLDILGQG…PQQAMLHPFI (336 aa)) form the Protein kinase domain. ATP is bound by residues 375 to 383 (LGQGTFGQV) and Lys398. Asp496 functions as the Proton acceptor in the catalytic mechanism. At Tyr530 the chain carries Phosphotyrosine. The disordered stretch occupies residues 714–758 (FPPGSSLPGPSEKHDDAKGQQSEYGSANDSSNNAGHNYVYNPSSA). The segment covering 732–758 (GQQSEYGSANDSSNNAGHNYVYNPSSA) has biased composition (polar residues).

Belongs to the protein kinase superfamily. CMGC Ser/Thr protein kinase family. MNB/DYRK subfamily. Phosphorylated; highly.

It is found in the cytoplasm. The protein resides in the nucleus. The catalysed reaction is L-seryl-[protein] + ATP = O-phospho-L-seryl-[protein] + ADP + H(+). The enzyme catalyses L-threonyl-[protein] + ATP = O-phospho-L-threonyl-[protein] + ADP + H(+). It catalyses the reaction L-tyrosyl-[protein] + ATP = O-phospho-L-tyrosyl-[protein] + ADP + H(+). Its function is as follows. Negative regulator of the cell cycle acting downstream of the cAMP-dependent protein kinase. Part of a glucose-sensing system involved in growth control in response to glucose availability. Phosphorylates POP2. This chain is Dual specificity protein kinase YAK1 (YAK1), found in Saccharomyces cerevisiae (strain ATCC 204508 / S288c) (Baker's yeast).